We begin with the raw amino-acid sequence, 518 residues long: Vesicular inhibitory amino acid transporter (518 aa).

The Cytoplasmic segment spans residues 1–125; it reads MATLIRSKLS…WNVTNAIQGM (125 aa). A helical membrane pass occupies residues 126 to 146; the sequence is FVLGLPYAILHGGYLGLFLII. At 147–197 the chain is on the lumenal, vesicle side; that stretch reads FAAVVCCYTGKILIACLYEENEDGETVRVRDSYVDIANACCAPRFPKLGGR. A helical transmembrane segment spans residues 198-218; that stretch reads VVNVAQIIELVMTCILYVVVS. The Cytoplasmic portion of the chain corresponds to 219-258; sequence GNLMYNSFPNLPISQKSWSIMATAVLLPCAFLKNLKAVSK. The chain crosses the membrane as a helical span at residues 259-279; the sequence is FSLLCTVAHFVINILVIAYCL. Topologically, residues 280-298 are lumenal, vesicle; that stretch reads SRARDWAWDKVKFYIDVKK. The helical transmembrane segment at 299–319 threads the bilayer; that stretch reads FPISIGIIVFSYTSQIFLPSL. The Cytoplasmic portion of the chain corresponds to 320 to 334; the sequence is EGNMQSPREFHCMMN. Residues 335 to 355 form a helical membrane-spanning segment; it reads WTHIAACILKGLFALVAYLTW. Over 356 to 376 the chain is Lumenal, vesicle; that stretch reads ADETKEVITDNLPSTIRAVVN. Residues 377-397 form a helical membrane-spanning segment; sequence LFLVSKALLSYPLPFFAAVEV. Residues 398–431 lie on the Cytoplasmic side of the membrane; sequence LEKSLFQEGARAFFPNCYGGDGRLKSWGLTLRCA. A helical transmembrane segment spans residues 432-452; the sequence is LVVFTLLMAIYVPHFALLMGL. The Lumenal, vesicle segment spans residues 453–454; it reads TG. A helical transmembrane segment spans residues 455 to 475; it reads SLTGAGLCFLLPSLFHLKLMW. Topologically, residues 476–482 are cytoplasmic; the sequence is RQLLWHQ. Residues 483–503 traverse the membrane as a helical segment; that stretch reads VFFDVSIFVIGSICSVSGFVH. The Lumenal, vesicle segment spans residues 504–518; it reads SLEGLIEAYAYNIED.

It belongs to the amino acid/polyamine transporter 2 family. In terms of tissue distribution, initially expressed in late neurula stages in the anterior spinal cord. By early tailbud stages, expression extends posteriorly along the entire developing spinal cord and appears in the hindbrain. In late tailbud embryos, expressed in the forebrain, midbrain, hindbrain, spinal cord and retina. In swimming tadpoles, expressed in an extended and more intense pattern including interneurons.

The protein localises to the cytoplasmic vesicle membrane. It localises to the presynapse. The enzyme catalyses 4-aminobutanoate(out) + n H(+)(in) = 4-aminobutanoate(in) + n H(+)(out). It carries out the reaction glycine(out) + n H(+)(in) = glycine(in) + n H(+)(out). The catalysed reaction is beta-alanine(out) + n H(+)(in) = beta-alanine(in) + n H(+)(out). In terms of biological role, antiporter that exchanges vesicular protons for cytosolic 4-aminobutanoate or to a lesser extend glycine, thus allowing their secretion from nerve terminals. The transport is equally dependent on the chemical and electrical components of the proton gradient. May also transport beta-alanine. Acidification of GABAergic synaptic vesicles is a prerequisite for 4-aminobutanoate uptake. This Xenopus laevis (African clawed frog) protein is Vesicular inhibitory amino acid transporter.